Reading from the N-terminus, the 285-residue chain is Nucleotide-binding protein HI_1146 (285 aa).

ATP is bound at residue 8–15; it reads GRSGAGKS. 56–59 contributes to the GTP binding site; it reads DIRN.

This sequence belongs to the RapZ-like family.

Displays ATPase and GTPase activities. The protein is Nucleotide-binding protein HI_1146 of Haemophilus influenzae (strain ATCC 51907 / DSM 11121 / KW20 / Rd).